Here is a 217-residue protein sequence, read N- to C-terminus: U exon protein (217 aa).

Disordered regions lie at residues 68–110 (SKIF…TNHG) and 170–217 (EKEA…RQGR). Over residues 202 to 217 (GGFQQPTGANQARQGR) the composition is skewed to polar residues.

This sequence belongs to the adenoviridae U exon protein family.

The protein localises to the host nucleus. It localises to the host nucleoplasm. It is found in the host nucleolus. In terms of biological role, might play a role in viral replication since it is associated with viral replication centers. Seems to have an effect on DBP localization. This chain is U exon protein, found in Homo sapiens (Human).